The chain runs to 439 residues: Hydrogenobyrinate a,c-diamide synthase (439 aa).

Residues 247–439 (RIALAEDGAF…FFHAIARASA (193 aa)) enclose the GATase cobBQ-type domain. Cys329 functions as the Nucleophile in the catalytic mechanism.

Belongs to the CobB/CbiA family. Requires Mg(2+) as cofactor.

It catalyses the reaction hydrogenobyrinate + 2 L-glutamine + 2 ATP + 2 H2O = hydrogenobyrinate a,c-diamide + 2 L-glutamate + 2 ADP + 2 phosphate + 2 H(+). Its pathway is cofactor biosynthesis; adenosylcobalamin biosynthesis; cob(II)yrinate a,c-diamide from precorrin-2 (aerobic route): step 9/10. Its function is as follows. Catalyzes the ATP-dependent amidation of the two carboxylate groups at positions a and c of hydrogenobyrinate, using either L-glutamine or ammonia as the nitrogen source. The polypeptide is Hydrogenobyrinate a,c-diamide synthase (Mesorhizobium japonicum (strain LMG 29417 / CECT 9101 / MAFF 303099) (Mesorhizobium loti (strain MAFF 303099))).